The following is a 226-amino-acid chain: Protein YAE1 homolog (226 aa).

Residues 45-85 (GYRDGIDAGKAVTLQQGFNQGYKKGAEVILNYGRLRGTLSA) are deca-GX3 motif; required for interaction with LTO1.

As to quaternary structure, forms a complex with LTO1.

It localises to the cytoplasm. It is found in the nucleus. Functionally, the complex LTO1:YAE1 functions as a target specific adapter that probably recruits apo-ABCE1 to the cytosolic iron-sulfur protein assembly (CIA) complex machinery. May be required for biogenesis of the large ribosomal subunit and initiation of translation. This is Protein YAE1 homolog from Homo sapiens (Human).